Reading from the N-terminus, the 134-residue chain is Small ribosomal subunit protein uS8 (134 aa).

The protein belongs to the universal ribosomal protein uS8 family. Part of the 30S ribosomal subunit. Contacts proteins S5 and S12.

One of the primary rRNA binding proteins, it binds directly to 16S rRNA central domain where it helps coordinate assembly of the platform of the 30S subunit. The polypeptide is Small ribosomal subunit protein uS8 (Sphingopyxis alaskensis (strain DSM 13593 / LMG 18877 / RB2256) (Sphingomonas alaskensis)).